We begin with the raw amino-acid sequence, 266 residues long: MLTFVGLGLYDERSITVAGREALRSADRVFAEFYTSKLAGATVEELQNHHDIDIEVRDRAGVEQEPGPILDAAEAGGAVFLTAGDTMISTTHVDLRLRADNRGIETQIIHGTTAGAAAASLSGLQNYRFGKATTLPFPYAHGGEGVPGSVLDTIADNRKRGLHTLVYLDIKVGTGPRGPDPDHEEYMTADYAAELLAEDLDTVGVAIARAGSPDPVLAADRLSALADRSFGDPLHLLIVPGDLHVVEHDALVALAGAPESALPDPV.

Residues leucine 9, aspartate 85, isoleucine 88, 113-114 (TA), leucine 168, alanine 210, and histidine 235 contribute to the S-adenosyl-L-methionine site.

It belongs to the diphthine synthase family. Homodimer.

The catalysed reaction is 2-[(3S)-amino-3-carboxypropyl]-L-histidyl-[translation elongation factor 2] + 3 S-adenosyl-L-methionine = diphthine-[translation elongation factor 2] + 3 S-adenosyl-L-homocysteine + 3 H(+). It participates in protein modification; peptidyl-diphthamide biosynthesis. S-adenosyl-L-methionine-dependent methyltransferase that catalyzes the trimethylation of the amino group of the modified target histidine residue in translation elongation factor 2 (EF-2), to form an intermediate called diphthine. The three successive methylation reactions represent the second step of diphthamide biosynthesis. The polypeptide is Diphthine synthase (Natronomonas pharaonis (strain ATCC 35678 / DSM 2160 / CIP 103997 / JCM 8858 / NBRC 14720 / NCIMB 2260 / Gabara) (Halobacterium pharaonis)).